The primary structure comprises 167 residues: Acetolactate synthase small subunit (167 aa).

One can recognise an ACT domain in the interval 7–81; that stretch reads TLSVLVEAKP…NVIKIVELED (75 aa).

The protein belongs to the acetolactate synthase small subunit family. Dimer of large and small chains.

It carries out the reaction 2 pyruvate + H(+) = (2S)-2-acetolactate + CO2. Its pathway is amino-acid biosynthesis; L-isoleucine biosynthesis; L-isoleucine from 2-oxobutanoate: step 1/4. It participates in amino-acid biosynthesis; L-valine biosynthesis; L-valine from pyruvate: step 1/4. This is Acetolactate synthase small subunit (ilvH) from Mycobacterium avium.